A 125-amino-acid chain; its full sequence is Small ribosomal subunit protein uS12 (125 aa).

Asp89 carries the post-translational modification 3-methylthioaspartic acid. The tract at residues Gly100–Ala125 is disordered. Basic residues predominate over residues Ser113–Ala125.

Belongs to the universal ribosomal protein uS12 family. In terms of assembly, part of the 30S ribosomal subunit. Contacts proteins S8 and S17. May interact with IF1 in the 30S initiation complex.

With S4 and S5 plays an important role in translational accuracy. In terms of biological role, interacts with and stabilizes bases of the 16S rRNA that are involved in tRNA selection in the A site and with the mRNA backbone. Located at the interface of the 30S and 50S subunits, it traverses the body of the 30S subunit contacting proteins on the other side and probably holding the rRNA structure together. The combined cluster of proteins S8, S12 and S17 appears to hold together the shoulder and platform of the 30S subunit. The sequence is that of Small ribosomal subunit protein uS12 from Dechloromonas aromatica (strain RCB).